We begin with the raw amino-acid sequence, 62 residues long: Photosystem II reaction center protein Z (62 aa).

The next 2 helical transmembrane spans lie at 8–28 (ALFA…IVFA) and 41–61 (FSGT…NSLI).

This sequence belongs to the PsbZ family. In terms of assembly, PSII is composed of 1 copy each of membrane proteins PsbA, PsbB, PsbC, PsbD, PsbE, PsbF, PsbH, PsbI, PsbJ, PsbK, PsbL, PsbM, PsbT, PsbY, PsbZ, Psb30/Ycf12, at least 3 peripheral proteins of the oxygen-evolving complex and a large number of cofactors. It forms dimeric complexes.

The protein localises to the plastid. It is found in the chloroplast thylakoid membrane. Its function is as follows. May control the interaction of photosystem II (PSII) cores with the light-harvesting antenna, regulates electron flow through the 2 photosystem reaction centers. PSII is a light-driven water plastoquinone oxidoreductase, using light energy to abstract electrons from H(2)O, generating a proton gradient subsequently used for ATP formation. The chain is Photosystem II reaction center protein Z from Drimys granadensis.